Here is a 257-residue protein sequence, read N- to C-terminus: Imidazole glycerol phosphate synthase subunit HisF (257 aa).

Residues Asp11 and Asp130 contribute to the active site.

This sequence belongs to the HisA/HisF family. Heterodimer of HisH and HisF.

The protein localises to the cytoplasm. The enzyme catalyses 5-[(5-phospho-1-deoxy-D-ribulos-1-ylimino)methylamino]-1-(5-phospho-beta-D-ribosyl)imidazole-4-carboxamide + L-glutamine = D-erythro-1-(imidazol-4-yl)glycerol 3-phosphate + 5-amino-1-(5-phospho-beta-D-ribosyl)imidazole-4-carboxamide + L-glutamate + H(+). It functions in the pathway amino-acid biosynthesis; L-histidine biosynthesis; L-histidine from 5-phospho-alpha-D-ribose 1-diphosphate: step 5/9. In terms of biological role, IGPS catalyzes the conversion of PRFAR and glutamine to IGP, AICAR and glutamate. The HisF subunit catalyzes the cyclization activity that produces IGP and AICAR from PRFAR using the ammonia provided by the HisH subunit. In Shewanella denitrificans (strain OS217 / ATCC BAA-1090 / DSM 15013), this protein is Imidazole glycerol phosphate synthase subunit HisF.